Consider the following 764-residue polypeptide: Protein translocase subunit SecA 2 (764 aa).

ATP contacts are provided by residues Gln83, 101 to 105 (GEGKT), and Asp490.

The protein belongs to the SecA family. As to quaternary structure, monomer and homodimer. Part of the essential Sec protein translocation apparatus which comprises SecA, SecYEG and auxiliary proteins SecDF. Other proteins may also be involved.

It localises to the cell membrane. The protein localises to the cytoplasm. It catalyses the reaction ATP + H2O + cellular proteinSide 1 = ADP + phosphate + cellular proteinSide 2.. In terms of biological role, part of the Sec protein translocase complex. Interacts with the SecYEG preprotein conducting channel. Has a central role in coupling the hydrolysis of ATP to the transfer of proteins into and across the cell membrane, serving as an ATP-driven molecular motor driving the stepwise translocation of polypeptide chains across the membrane. The chain is Protein translocase subunit SecA 2 from Corynebacterium diphtheriae (strain ATCC 700971 / NCTC 13129 / Biotype gravis).